The following is a 129-amino-acid chain: Small ribosomal subunit protein uS12 (129 aa).

At D89 the chain carries 3-methylthioaspartic acid.

This sequence belongs to the universal ribosomal protein uS12 family. Part of the 30S ribosomal subunit. Contacts proteins S8 and S17. May interact with IF1 in the 30S initiation complex.

Functionally, with S4 and S5 plays an important role in translational accuracy. In terms of biological role, interacts with and stabilizes bases of the 16S rRNA that are involved in tRNA selection in the A site and with the mRNA backbone. Located at the interface of the 30S and 50S subunits, it traverses the body of the 30S subunit contacting proteins on the other side and probably holding the rRNA structure together. The combined cluster of proteins S8, S12 and S17 appears to hold together the shoulder and platform of the 30S subunit. The polypeptide is Small ribosomal subunit protein uS12 (Rickettsia akari (strain Hartford)).